The sequence spans 350 residues: Arabinogalactan endo-beta-1,4-galactanase A (350 aa).

A signal peptide spans 1-16 (MIYPLLLSALPLLSSA). N128 carries N-linked (GlcNAc...) asparagine glycosylation. E152 serves as the catalytic Proton donor. E262 (nucleophile) is an active-site residue.

The protein belongs to the glycosyl hydrolase 53 family.

The protein localises to the secreted. It carries out the reaction The enzyme specifically hydrolyzes (1-&gt;4)-beta-D-galactosidic linkages in type I arabinogalactans.. In terms of biological role, endogalactanase involved in the degradation of plant cell wall polysaccharides, and more particularly of hairy regions of pectin. This is Arabinogalactan endo-beta-1,4-galactanase A (galA) from Aspergillus niger.